The sequence spans 380 residues: Cystathionine gamma-synthase (380 aa).

An N6-(pyridoxal phosphate)lysine modification is found at Lys-195.

It belongs to the trans-sulfuration enzymes family. In terms of assembly, homotetramer. Pyridoxal 5'-phosphate is required as a cofactor.

It localises to the cytoplasm. The enzyme catalyses O-succinyl-L-homoserine + L-cysteine = L,L-cystathionine + succinate + H(+). It functions in the pathway amino-acid biosynthesis; L-methionine biosynthesis via de novo pathway; L-cystathionine from O-succinyl-L-homoserine: step 1/1. Four natural products, alpha-lapachone, 9-hydroxy-alpha-lapachone, Paulownin, and Yangambin, show strong inhibitory activities against CGS. All these four inhibitors prevent the binding of OSHS to CGS in a non-competitive fashion. These compounds are specific inhibitors against CGS from H.pylori relative to E.coli since they exhibit very low inhibition activities against CGS from E.coli. Catalyzes the formation of L-cystathionine from O-succinyl-L-homoserine (OSHS) and L-cysteine, via a gamma-replacement reaction. In the absence of thiol, catalyzes gamma-elimination to form 2-oxobutanoate, succinate and ammonia. This Helicobacter pylori (Campylobacter pylori) protein is Cystathionine gamma-synthase (metB).